Consider the following 233-residue polypeptide: Serine-rich 25 kDa antigen protein (233 aa).

Positions 35-219 (KNEASPEKLE…DNNNLDAASS (185 aa)) are disordered. Basic and acidic residues predominate over residues 38–53 (ASPEKLEEAEEKEKSS). Over residues 61–71 (SNEDNEDDEDE) the composition is skewed to acidic residues. Tandem repeats lie at residues 82–93 (SSSDKPDNKPEA), 102–113 (SSSDKPDNKPEA), 114–125 (SSSDKPDNKPEA), 126–137 (SSSDKPDNKPEA), 138–149 (SSSDKPDNKPEA), 150–161 (SSSDKPDNKPEA), 162–169 (SSTNKPEA), 170–177 (SSTNKPEA), 178–185 (SSTNKPEA), and 186–193 (SSTNKPEA). The segment at 82–161 (SSSDKPDNKP…SDKPDNKPEA (80 aa)) is 6 X 12 AA tandem repeats of S-S-S-D-K-P-D-N-K-P-E-A. The segment covering 83-159 (SSDKPDNKPE…SSSDKPDNKP (77 aa)) has biased composition (basic and acidic residues). Residues 160–192 (EASSTNKPEASSTNKPEASSTNKPEASSTNKPE) show a composition bias toward polar residues. A 4 X 8 AA tandem repeats of S-S-T-N-K-P-E-A region spans residues 162–193 (SSTNKPEASSTNKPEASSTNKPEASSTNKPEA). Over residues 193–219 (ASSTSNSNDKSGSSSDNDNNNLDAASS) the composition is skewed to low complexity.

In terms of processing, phosphorylated on serine residue(s). Post-translationally, O-glycosylated; glycans consist of single N-acetylglucosamine residues. O-acylated; acyl group is probably palmitate, not myristate.

The protein localises to the cell membrane. Functionally, plays a role in the adhesion to host cells. Involved in the adhesion to host apoptotic cells thereby facilitating their phagocytosis. The sequence is that of Serine-rich 25 kDa antigen protein from Entamoeba histolytica (strain ATCC 30459 / HM-1:IMSS / ABRM).